Here is a 452-residue protein sequence, read N- to C-terminus: Phosphatidate cytidylyltransferase, mitochondrial (452 aa).

The protein belongs to the TAM41 family. The cofactor is Mg(2+).

The protein resides in the mitochondrion inner membrane. The catalysed reaction is a 1,2-diacyl-sn-glycero-3-phosphate + CTP + H(+) = a CDP-1,2-diacyl-sn-glycerol + diphosphate. The protein operates within phospholipid metabolism; CDP-diacylglycerol biosynthesis; CDP-diacylglycerol from sn-glycerol 3-phosphate: step 3/3. Its function is as follows. Catalyzes the conversion of phosphatidic acid (PA) to CDP-diacylglycerol (CDP-DAG), an essential intermediate in the synthesis of phosphatidylglycerol, cardiolipin and phosphatidylinositol. The protein is Phosphatidate cytidylyltransferase, mitochondrial (TAMM41) of Homo sapiens (Human).